Reading from the N-terminus, the 593-residue chain is High affinity cGMP-specific 3',5'-cyclic phosphodiesterase 9A (593 aa).

Residues 87-142 are disordered; the sequence is SAGVEDKRTTSRGQSAERPLRDRRVVGLEQPRREGAFESGQVEPRPREPQGCCQEG. Over residues 104–122 the composition is skewed to basic and acidic residues; the sequence is RPLRDRRVVGLEQPRREGA. The PDEase domain maps to 236–557; it reads PRRDVPTYPK…DRYEELKRID (322 aa). Histidine 312 serves as the catalytic Proton donor. 312–316 contributes to the 3',5'-cyclic GMP binding site; that stretch reads HNFRH. Zn(2+) is bound by residues histidine 316, histidine 352, and aspartate 353. Residue aspartate 353 participates in 3',5'-cyclic GMP binding. Mg(2+) is bound at residue aspartate 353. Residue serine 379 is modified to Phosphoserine. 3',5'-cyclic GMP contacts are provided by residues aspartate 462, tyrosine 484, and 512-513; that span reads AQ. Aspartate 462 provides a ligand contact to Zn(2+). The tract at residues 564–593 is disordered; the sequence is QKKTDSLTSGATEKSRERSRDVKNSEGDCA. The segment covering 576 to 593 has biased composition (basic and acidic residues); it reads EKSRERSRDVKNSEGDCA.

It belongs to the cyclic nucleotide phosphodiesterase family. PDE9 subfamily. In terms of assembly, homodimer. The cofactor is Zn(2+). It depends on Mg(2+) as a cofactor.

It is found in the cell projection. The protein resides in the ruffle membrane. The protein localises to the cytoplasm. Its subcellular location is the perinuclear region. It localises to the golgi apparatus. It is found in the endoplasmic reticulum. The protein resides in the cell membrane. The protein localises to the sarcolemma. It carries out the reaction 3',5'-cyclic GMP + H2O = GMP + H(+). The protein operates within purine metabolism; 3',5'-cyclic GMP degradation; GMP from 3',5'-cyclic GMP: step 1/1. Its activity is regulated as follows. Specifically inhibited by a compound named 3r ((R)-2-((1-cyclopentyl-4-hydroxy-1H-pyrazolo[3,4-d]pyrimidin-6- yl)amino)-N-(4-methoxyphenyl)propanamide); the inhibitor forms a hydrogen bond with Tyr-484, Ala-512 and Gln-513. In terms of biological role, specifically hydrolyzes the second messenger cGMP, which is a key regulator of many important physiological processes. Highly specific: compared to other members of the cyclic nucleotide phosphodiesterase family, has the highest affinity and selectivity for cGMP. Specifically regulates natriuretic-peptide-dependent cGMP signaling in heart, acting as a regulator of cardiac hypertrophy in myocytes and muscle. Does not regulate nitric oxide-dependent cGMP in heart. Additional experiments are required to confirm whether its ability to hydrolyze natriuretic-peptide-dependent cGMP is specific to heart or is a general feature of the protein. In brain, involved in cognitive function, such as learning and long-term memory. The polypeptide is High affinity cGMP-specific 3',5'-cyclic phosphodiesterase 9A (PDE9A) (Pan troglodytes (Chimpanzee)).